The following is a 410-amino-acid chain: Na(+)/H(+) antiporter NhaS4 (410 aa).

11 helical membrane passes run 7–27 (LLIL…GLLF), 33–53 (PPVI…LGLL), 69–89 (FLYL…GLEL), 107–127 (VSIF…LYSL), 135–155 (FIPF…PVLA), 173–193 (LTCA…AIAV), 199–219 (IFGA…MVTL), 241–261 (LLTF…WIGI), 291–311 (FVST…TDLG), 319–339 (WAVC…GVYV), and 376–396 (GVIS…TTII).

It belongs to the monovalent cation:proton antiporter 2 (CPA2) transporter (TC 2.A.37) family.

The protein localises to the membrane. Na(+)/H(+) antiporter. The sequence is that of Na(+)/H(+) antiporter NhaS4 (nhaS4) from Synechocystis sp. (strain ATCC 27184 / PCC 6803 / Kazusa).